The following is a 21-amino-acid chain: Fibrinogen beta chain (21 aa).

A Pyrrolidone carboxylic acid modification is found at Gln-1. Positions 1 to 11 are enriched in acidic residues; that stretch reads QFPTDYDEGED. A disordered region spans residues 1–21; that stretch reads QFPTDYDEGEDDRPKSGLGAR. O-linked (GalNAc...) threonine glycosylation is present at Thr-4. The residue at position 6 (Tyr-6) is a Sulfotyrosine.

Heterohexamer; disulfide linked. Contains 2 sets of 3 non-identical chains (alpha, beta and gamma). The 2 heterotrimers are in head to head conformation with the N-termini in a small central domain. Post-translationally, conversion of fibrinogen to fibrin is triggered by thrombin, which cleaves fibrinopeptides A and B from alpha and beta chains, and thus exposes the N-terminal polymerization sites responsible for the formation of the soft clot.

It is found in the secreted. Functionally, cleaved by the protease thrombin to yield monomers which, together with fibrinogen alpha (FGA) and fibrinogen gamma (FGG), polymerize to form an insoluble fibrin matrix. Fibrin has a major function in hemostasis as one of the primary components of blood clots. In addition, functions during the early stages of wound repair to stabilize the lesion and guide cell migration during re-epithelialization. Was originally thought to be essential for platelet aggregation, based on in vitro studies using anticoagulated blood. However subsequent studies have shown that it is not absolutely required for thrombus formation in vivo. Enhances expression of SELP in activated platelets. Maternal fibrinogen is essential for successful pregnancy. Fibrin deposition is also associated with infection, where it protects against IFNG-mediated hemorrhage. May also facilitate the antibacterial immune response via both innate and T-cell mediated pathways. This Syncerus caffer (African buffalo) protein is Fibrinogen beta chain (FGB).